Here is a 300-residue protein sequence, read N- to C-terminus: Apolipoprotein E (300 aa).

Positions 1 to 18 are cleaved as a signal peptide; sequence MKVLWAVLVVTLLAGCQA. The tract at residues 74 to 246 is 8 X 22 AA approximate tandem repeats; it reads VLMEDTMKEV…RLDEVREQME (173 aa). A run of 8 repeats spans residues 75 to 95, 96 to 117, 118 to 139, 140 to 161, 162 to 183, 184 to 205, 206 to 224, and 225 to 243. A Methionine sulfoxide modification is found at Met137. Ser141 carries the post-translational modification Phosphoserine. Residues 152–162 form an LDL and other lipoprotein receptors binding region; the sequence is HLRKLRKRLLR. 156–159 is a binding site for heparin; that stretch reads LRKR. A lipid-binding and lipoprotein association region spans residues 204 to 274; it reads TAALTSQPLQ…GWFEPMMEDI (71 aa). 220-227 is a heparin binding site; sequence GERLRGRL. Residues 262-274 form a specificity for association with VLDL region; that stretch reads RLKGWFEPMMEDI.

It belongs to the apolipoprotein A1/A4/E family. Homotetramer. May interact with ABCA1; functionally associated with ABCA1 in the biogenesis of HDLs. May interact with APP/A4 amyloid-beta peptide; the interaction is extremely stable in vitro but its physiological significance is unclear. May interact with MAPT. May interact with MAP2. In the cerebrospinal fluid, interacts with secreted SORL1. Interacts with PMEL; this allows the loading of PMEL luminal fragment on ILVs to induce fibril nucleation. In terms of processing, APOE exists as multiple glycosylated and sialylated glycoforms within cells and in plasma. The extent of glycosylation and sialylation are tissue and context specific. Post-translationally, glycated in plasma VLDL. Phosphorylated by FAM20C in the extracellular medium.

Its subcellular location is the secreted. It localises to the extracellular space. The protein resides in the extracellular matrix. It is found in the extracellular vesicle. The protein localises to the endosome. Its subcellular location is the multivesicular body. In terms of biological role, APOE is an apolipoprotein, a protein associating with lipid particles, that mainly functions in lipoprotein-mediated lipid transport between organs via the plasma and interstitial fluids. APOE is a core component of plasma lipoproteins and is involved in their production, conversion and clearance. Apolipoproteins are amphipathic molecules that interact both with lipids of the lipoprotein particle core and the aqueous environment of the plasma. As such, APOE associates with chylomicrons, chylomicron remnants, very low density lipoproteins (VLDL) and intermediate density lipoproteins (IDL) but shows a preferential binding to high-density lipoproteins (HDL). It also binds a wide range of cellular receptors including the LDL receptor/LDLR, the LDL receptor-related proteins LRP1, LRP2 and LRP8 and the very low-density lipoprotein receptor/VLDLR that mediate the cellular uptake of the APOE-containing lipoprotein particles. Finally, APOE also has a heparin-binding activity and binds heparan-sulfate proteoglycans on the surface of cells, a property that supports the capture and the receptor-mediated uptake of APOE-containing lipoproteins by cells. A main function of APOE is to mediate lipoprotein clearance through the uptake of chylomicrons, VLDLs, and HDLs by hepatocytes. APOE is also involved in the biosynthesis by the liver of VLDLs as well as their uptake by peripheral tissues ensuring the delivery of triglycerides and energy storage in muscle, heart and adipose tissues. By participating in the lipoprotein-mediated distribution of lipids among tissues, APOE plays a critical role in plasma and tissues lipid homeostasis. APOE is also involved in two steps of reverse cholesterol transport, the HDLs-mediated transport of cholesterol from peripheral tissues to the liver, and thereby plays an important role in cholesterol homeostasis. First, it is functionally associated with ABCA1 in the biogenesis of HDLs in tissues. Second, it is enriched in circulating HDLs and mediates their uptake by hepatocytes. APOE also plays an important role in lipid transport in the central nervous system, regulating neuron survival and sprouting. The protein is Apolipoprotein E (APOE) of Dinomys branickii (Pacarana).